A 169-amino-acid polypeptide reads, in one-letter code: 2-C-methyl-D-erythritol 2,4-cyclodiphosphate synthase (169 aa).

A divalent metal cation contacts are provided by aspartate 13 and histidine 15. Residues 13–15 (DIH) and 40–41 (HS) each bind 4-CDP-2-C-methyl-D-erythritol 2-phosphate. Histidine 48 serves as a coordination point for a divalent metal cation. 4-CDP-2-C-methyl-D-erythritol 2-phosphate is bound by residues 62 to 64 (DIG), 138 to 141 (TTNE), and arginine 148.

The protein belongs to the IspF family. As to quaternary structure, homotrimer. Requires a divalent metal cation as cofactor.

It catalyses the reaction 4-CDP-2-C-methyl-D-erythritol 2-phosphate = 2-C-methyl-D-erythritol 2,4-cyclic diphosphate + CMP. It participates in isoprenoid biosynthesis; isopentenyl diphosphate biosynthesis via DXP pathway; isopentenyl diphosphate from 1-deoxy-D-xylulose 5-phosphate: step 4/6. Involved in the biosynthesis of isopentenyl diphosphate (IPP) and dimethylallyl diphosphate (DMAPP), two major building blocks of isoprenoid compounds. Catalyzes the conversion of 4-diphosphocytidyl-2-C-methyl-D-erythritol 2-phosphate (CDP-ME2P) to 2-C-methyl-D-erythritol 2,4-cyclodiphosphate (ME-CPP) with a corresponding release of cytidine 5-monophosphate (CMP). In Akkermansia muciniphila (strain ATCC BAA-835 / DSM 22959 / JCM 33894 / BCRC 81048 / CCUG 64013 / CIP 107961 / Muc), this protein is 2-C-methyl-D-erythritol 2,4-cyclodiphosphate synthase.